The sequence spans 247 residues: Carboxy-S-adenosyl-L-methionine synthase (247 aa).

Residues Tyr-39, 64–66 (GCS), 89–90 (DN), 117–118 (DI), Asn-132, and Arg-199 each bind S-adenosyl-L-methionine.

The protein belongs to the class I-like SAM-binding methyltransferase superfamily. Cx-SAM synthase family. Homodimer.

It carries out the reaction prephenate + S-adenosyl-L-methionine = carboxy-S-adenosyl-L-methionine + 3-phenylpyruvate + H2O. Its function is as follows. Catalyzes the conversion of S-adenosyl-L-methionine (SAM) to carboxy-S-adenosyl-L-methionine (Cx-SAM). This is Carboxy-S-adenosyl-L-methionine synthase from Klebsiella pneumoniae subsp. pneumoniae (strain ATCC 700721 / MGH 78578).